Consider the following 213-residue polypeptide: MTDQSHQCVIIGIAGASASGKSLIASTLYRELREQVGDEHIGVIPEDSYYKDQSHLSMEERVKTNYDHPNAMDHSLLFQHLQALKRGSAIELPVYSYVEHTRMQETVRVEPKKVIILEGILLLTDARLREEMNFSIFVDTPLDICLMRRIKRDVNERGRSMDSVMAQYQKTVRPMFLQFIEPSKQYADIIVPCGGKNRIAIDILKAKISQFFE.

15-22 (GASASGKS) is a binding site for ATP.

Belongs to the uridine kinase family.

The protein localises to the cytoplasm. The enzyme catalyses uridine + ATP = UMP + ADP + H(+). The catalysed reaction is cytidine + ATP = CMP + ADP + H(+). It participates in pyrimidine metabolism; CTP biosynthesis via salvage pathway; CTP from cytidine: step 1/3. It functions in the pathway pyrimidine metabolism; UMP biosynthesis via salvage pathway; UMP from uridine: step 1/1. This Salmonella paratyphi A (strain ATCC 9150 / SARB42) protein is Uridine kinase.